The primary structure comprises 708 residues: Leukotoxin translocation ATP-binding protein LktB (708 aa).

One can recognise a Peptidase C39 domain in the interval 1–126 (MEANHQRNDL…ACYQGQLILV (126 aa)). Positions 155–437 (FLETLIVSIF…LAQLWQDFQQ (283 aa)) constitute an ABC transmembrane type-1 domain. Transmembrane regions (helical) follow at residues 159–179 (LIVS…FQVV), 192–212 (LNII…LSGL), 270–290 (ALTS…MWYY), 296–316 (LVIL…SPIL), and 389–409 (VMVI…LSIG). In terms of domain architecture, ABC transporter spans 469–704 (ISFKNIRFRY…SNGLYSYLHQ (236 aa)). 503–510 (GRSGSGKS) provides a ligand contact to ATP.

This sequence belongs to the ABC transporter superfamily. Protein-1 exporter (TC 3.A.1.109) family. As to quaternary structure, homodimer.

The protein resides in the cell inner membrane. The catalysed reaction is ATP + H2O + proteinSide 1 = ADP + phosphate + proteinSide 2.. Functionally, part of the ABC transporter complex LktBD involved in leukotoxin export. Transmembrane domains (TMD) form a pore in the inner membrane and the ATP-binding domain (NBD) is responsible for energy generation. This chain is Leukotoxin translocation ATP-binding protein LktB (lktB), found in Mannheimia haemolytica (Pasteurella haemolytica).